We begin with the raw amino-acid sequence, 253 residues long: Indole-3-glycerol phosphate synthase (253 aa).

Belongs to the TrpC family.

The enzyme catalyses 1-(2-carboxyphenylamino)-1-deoxy-D-ribulose 5-phosphate + H(+) = (1S,2R)-1-C-(indol-3-yl)glycerol 3-phosphate + CO2 + H2O. It functions in the pathway amino-acid biosynthesis; L-tryptophan biosynthesis; L-tryptophan from chorismate: step 4/5. In Exiguobacterium sp. (strain ATCC BAA-1283 / AT1b), this protein is Indole-3-glycerol phosphate synthase.